The primary structure comprises 196 residues: Thymidylate kinase (196 aa).

ATP is bound at residue 7–14 (GIDGSGKT).

This sequence belongs to the thymidylate kinase family.

The enzyme catalyses dTMP + ATP = dTDP + ADP. Functionally, phosphorylation of dTMP to form dTDP in both de novo and salvage pathways of dTTP synthesis. The protein is Thymidylate kinase of Wolbachia pipientis wMel.